The sequence spans 356 residues: Carminomycin 4-O-methyltransferase DauK (356 aa).

Arginine 153 contributes to the S-adenosyl-L-methionine binding site. Aspartate 163 contacts substrate. S-adenosyl-L-methionine is bound by residues glycine 187, glutamate 210, 237–238 (DF), and serine 252. Substrate-binding residues include asparagine 257 and arginine 303.

Belongs to the class I-like SAM-binding methyltransferase superfamily. Cation-independent O-methyltransferase family. As to quaternary structure, homodimer and homotetramer in equilibrium.

It carries out the reaction carminomycin + S-adenosyl-L-methionine = daunorubicin + S-adenosyl-L-homocysteine + H(+). Its pathway is antibiotic biosynthesis; daunorubicin biosynthesis. The protein operates within antibiotic biosynthesis; carminomycin biosynthesis. Strongly inhibited by S-adenosyl-L-homocysteine and weakly by adenine and methionine. Its function is as follows. Involved in the biosynthesis of the anthracyclines carminomycin and daunorubicin (daunomycin) which are aromatic polyketide antibiotics that exhibit high cytotoxicity and are widely applied in the chemotherapy of a variety of cancers. In vivo, catalyzes the transfer of a methyl group from S-adenosyl-L-methionine to the 4-O-position of carminomycin to form daunorubicin. In vitro, it also methylates the anthracyclines rhodomycin D (10-carbomethoxy-13-deoxycarminomycin), 10-carboxy-13-deoxycarminomycin, 13-deoxy-carminomycin and 13-dihydrocarminomycin at the 4-hydroxyl position. This is Carminomycin 4-O-methyltransferase DauK (dauK) from Streptomyces sp. (strain C5).